The primary structure comprises 84 residues: Conotoxin Tx8.1 (84 aa).

A signal peptide spans 1-19 (LKMGAMFVLLLLFTLASSH). The propeptide occupies 20 to 44 (REGDIQARKTHLKSDFYRTLPRFAR).

This sequence belongs to the conotoxin S superfamily. Contains 5 disulfide bonds. As to expression, expressed by the venom duct.

The protein localises to the secreted. The sequence is that of Conotoxin Tx8.1 from Conus textile (Cloth-of-gold cone).